Consider the following 118-residue polypeptide: Mating-type P-specific polypeptide Pc (118 aa).

A DNA-binding region (HMG box) is located at residues 29–97 (KTTIYKNGFM…VRRQIAKLER (69 aa)).

The protein localises to the nucleus. Its function is as follows. Mating type proteins are sequence specific DNA-binding proteins that act as master switches in yeast differentiation by controlling gene expression in a cell type-specific fashion. Required for conjugation and efficient meiosis. The protein is Mating-type P-specific polypeptide Pc (mat2-Pc) of Schizosaccharomyces pombe (Fission yeast).